The sequence spans 582 residues: uncharacterized protein (582 aa).

Basic and acidic residues predominate over residues 1 to 23; it reads MAHEGSRQVRDRGVTRSKAEKVR. Disordered stretches follow at residues 1 to 29, 110 to 133, and 147 to 221; these read MAHE…TVPV, AVAE…SWAQ, and LENF…SSAG. Serine 242 is modified (phosphoserine). Disordered stretches follow at residues 310 to 331 and 551 to 582; these read RPSA…SAHH and LSSG…PKPR. Polar residues predominate over residues 311–320; it reads PSASCQQQRA.

This is an uncharacterized protein from Homo sapiens (Human).